The sequence spans 430 residues: Centrosomal protein CEP57L1 (430 aa).

Phosphoserine is present on Ser-45. A coiled-coil region spans residues 46-213 (PNNQALVSAL…HQRRLFQDRA (168 aa)). Disordered regions lie at residues 248–290 (CLKR…GEPF) and 362–430 (RKLQ…KWEQ). Composition is skewed to basic and acidic residues over residues 249 to 272 (LKREPPQHTDCRFRGPASERERPP), 362 to 372 (RKLQEKVENSR), and 421 to 430 (LRRDDVKWEQ). Residues 290–377 (FSICDNLSEL…VENSRINESS (88 aa)) are a coiled coil.

Belongs to the translokin family.

The protein localises to the cytoplasm. The protein resides in the cytoskeleton. It is found in the microtubule organizing center. Its subcellular location is the centrosome. In terms of biological role, centrosomal protein which may be required for microtubule attachment to centrosomes. The sequence is that of Centrosomal protein CEP57L1 (Cep57l1) from Rattus norvegicus (Rat).